The sequence spans 313 residues: Acetaldehyde dehydrogenase (313 aa).

Position 12 to 15 (12 to 15) interacts with NAD(+); the sequence is SGNI. Residue Cys132 is the Acyl-thioester intermediate of the active site. Residues 163–171 and Asn291 contribute to the NAD(+) site; that span reads SAGPGTRAN.

It belongs to the acetaldehyde dehydrogenase family.

It catalyses the reaction acetaldehyde + NAD(+) + CoA = acetyl-CoA + NADH + H(+). This Burkholderia cepacia (Pseudomonas cepacia) protein is Acetaldehyde dehydrogenase (bphG).